The sequence spans 81 residues: Kappa-theraphotoxin-Gr2c (81 aa).

Positions 1–19 (MKAFFVILGLALLCAYSFA) are cleaved as a signal peptide. Positions 20-50 (LEEQDQLSLRNDLLTVMFAENSELTPETEER) are excised as a propeptide. Intrachain disulfides connect Cys52–Cys66, Cys59–Cys71, and Cys65–Cys75.

This sequence belongs to the neurotoxin 30 (phrixotoxin) family. Expressed by the venom gland.

It is found in the secreted. Functionally, inhibits sodium channels Nav1.1/SCN1A (IC(50)=5.7 uM), Nav1.2/SCN2A (IC(50)=12 uM), Nav1.4/SCN4A (IC(50)=4 uM), Nav1.6/SCN8A (IC(50)=6.6 uM), Nav1.7/SCN9A (IC(50)=13.6-1030 nM), potassium channels Kv11.1/KCNH2 (IC(50)=4.7 uM), as well as high-voltage-gated calcium channels Cav1.2/CACNA1C (IC(50)= nM). Also blocks mechanosensitive ion channels (also named stretch-activated channels or SACs) and the hypotonic cell swelling induced calcium increase associated with the activation of such channels. It can thus be useful in treating cardiac ventricular disturbances. Also induces analgesia in mammals. The sequence is that of Kappa-theraphotoxin-Gr2c from Grammostola rosea (Chilean rose tarantula).